Here is a 283-residue protein sequence, read N- to C-terminus: Malonyl-[acyl-carrier protein] O-methyltransferase (283 aa).

Belongs to the methyltransferase superfamily.

It catalyses the reaction malonyl-[ACP] + S-adenosyl-L-methionine = malonyl-[ACP] methyl ester + S-adenosyl-L-homocysteine. Its pathway is cofactor biosynthesis; biotin biosynthesis. Converts the free carboxyl group of a malonyl-thioester to its methyl ester by transfer of a methyl group from S-adenosyl-L-methionine (SAM). It allows to synthesize pimeloyl-ACP via the fatty acid synthetic pathway. The protein is Malonyl-[acyl-carrier protein] O-methyltransferase of Acetivibrio thermocellus (strain ATCC 27405 / DSM 1237 / JCM 9322 / NBRC 103400 / NCIMB 10682 / NRRL B-4536 / VPI 7372) (Clostridium thermocellum).